Reading from the N-terminus, the 769-residue chain is Metal transporter CNNM4 (769 aa).

The Extracellular segment spans residues 1–175 (MAASAGCYYG…RLRVLEEEKP (175 aa)). N-linked (GlcNAc...) asparagine glycosylation is found at Asn99 and Asn115. Positions 175 to 355 (PLLPIWLQAC…EPYSGIVREE (181 aa)) constitute a CNNM transmembrane domain. A helical membrane pass occupies residues 176 to 196 (LLPIWLQACIIAVLLTLSGIF). The Cytoplasmic segment spans residues 197 to 237 (SGLNLGLMALDPMELRVVQRCGTEKEKRYASKIEPVRRKGN). An intramembrane region (helical) is located at residues 238–258 (YLLCSLLLGNVLVNTTLTALL). Residues 259–261 (DEL) lie on the Cytoplasmic side of the membrane. The helical transmembrane segment at 262 to 282 (IGSGLAAVLASTTGIVVLGEI) threads the bilayer. At 283 to 292 (VPQALCSRHG) the chain is on the extracellular side. A helical transmembrane segment spans residues 293–313 (LAVGANTLWLTRIFMLLTFPV). The Cytoplasmic portion of the chain corresponds to 314-769 (AYPVSRLLDC…SQHSLQHNAV (456 aa)). CBS domains are found at residues 374-435 (MTKV…CTPL) and 442-508 (YSHP…ILDE). Positions 717–769 (LMSSRLDSSPQSPEGGTRKPDSTLSERSEVLEDETTSLLNQRNSQHSLQHNAV) are disordered. Residues 721 to 730 (RLDSSPQSPE) show a composition bias toward polar residues. Over residues 732–746 (GTRKPDSTLSERSEV) the composition is skewed to basic and acidic residues. Positions 752–769 (TSLLNQRNSQHSLQHNAV) are enriched in polar residues.

The protein belongs to the ACDP family.

It localises to the cell membrane. Probable metal transporter. The polypeptide is Metal transporter CNNM4 (cnnm4) (Xenopus tropicalis (Western clawed frog)).